Consider the following 86-residue polypeptide: Large ribosomal subunit protein bL27 (86 aa).

Positions 1-26 (MATKKAGGSSRNGRDSAGRRLGVKKS) are disordered.

The protein belongs to the bacterial ribosomal protein bL27 family.

The polypeptide is Large ribosomal subunit protein bL27 (Rickettsia prowazekii (strain Madrid E)).